A 197-amino-acid polypeptide reads, in one-letter code: Large ribosomal subunit protein uL11 (197 aa).

Belongs to the universal ribosomal protein uL11 family. Part of the ribosomal stalk of the 50S ribosomal subunit. Interacts with L10 and the large rRNA to form the base of the stalk. L10 forms an elongated spine to which L12 dimers bind in a sequential fashion forming a multimeric L10(L12)X complex. Post-translationally, one or more lysine residues are methylated.

In terms of biological role, forms part of the ribosomal stalk which helps the ribosome interact with GTP-bound translation factors. In Mycoplasmopsis pulmonis (strain UAB CTIP) (Mycoplasma pulmonis), this protein is Large ribosomal subunit protein uL11.